We begin with the raw amino-acid sequence, 1365 residues long: Serine-aspartate repeat-containing protein D (1365 aa).

A signal peptide spans 1-35 (MLNRENKTAITRKGMVSNRLNKFSIRKYTVGTASI). Residues 23–34 (FSIRKYTVGTAS) carry the YSIRK-G/S signaling motif motif. The interval 36–568 (LVGTTLIFGL…NNQSGGAGQE (533 aa)) is ligand binding A region. The tract at residues 54-185 (ESTNKELNEA…NKKVDAKTES (132 aa)) is disordered. Polar residues-rich tracts occupy residues 62–71 (EATTSASDNQ) and 94–109 (EMVS…NGNK). The segment covering 130 to 145 (KSDEQASPKSTNEDLN) has biased composition (basic and acidic residues). 2 stretches are compositionally biased toward polar residues: residues 146-155 (TKQTISNQEA) and 163-173 (NKSVVNAQPTN). Basic and acidic residues predominate over residues 174–183 (EENKKVDAKT). CNA-B domains lie at 569–680 (VYKI…IYKP), 681–791 (KYNL…YKTP), 792–901 (KYNL…FYKP), 902–1012 (TYNL…YKTP), and 1013–1123 (KYSL…EEDT). Disordered stretches follow at residues 857–884 (ETPS…STTG), 972–991 (YTPT…NGLT), and 1078–1341 (EKPA…SNNA). Polar residues-rich tracts occupy residues 860–869 (SGYTPTQVGS) and 972–981 (YTPTSVTSGN). Composition is skewed to acidic residues over residues 1091–1101 (TEDDKDADGGE) and 1118–1304 (YFEE…DSDS). Residues 1328–1332 (LPETG) carry the LPXTG sorting signal motif. A Pentaglycyl murein peptidoglycan amidated threonine modification is found at threonine 1331. Residues 1332-1365 (GNENSGSNNATLFGGLFAALGSLLLFGRRKKQNK) constitute a propeptide, removed by sortase.

Belongs to the serine-aspartate repeat-containing protein (SDr) family. Interacts with host DSG1; this interaction increases S.aureus adherence to keratinocytes.

It localises to the secreted. The protein localises to the cell wall. Functionally, cell surface-associated calcium-binding protein which plays an important role in adhesion and pathogenesis. Mediates interactions with components of the extracellular matrix such as host DSG1 to promote bacterial adhesion to host cells. Contributes to the resistance to killing by innate immune components such as neutrophils present in blood and thus attenuates bacterial clearance. In Staphylococcus aureus (strain MSSA476), this protein is Serine-aspartate repeat-containing protein D (sdrD).